A 139-amino-acid chain; its full sequence is D-ribose pyranase (139 aa).

His20 functions as the Proton donor in the catalytic mechanism. Residues Asp28, His106, and 128–130 (YAN) each bind substrate.

Belongs to the RbsD / FucU family. RbsD subfamily. As to quaternary structure, homodecamer.

The protein resides in the cytoplasm. It carries out the reaction beta-D-ribopyranose = beta-D-ribofuranose. The protein operates within carbohydrate metabolism; D-ribose degradation; D-ribose 5-phosphate from beta-D-ribopyranose: step 1/2. Its function is as follows. Catalyzes the interconversion of beta-pyran and beta-furan forms of D-ribose. The polypeptide is D-ribose pyranase (Pectobacterium atrosepticum (strain SCRI 1043 / ATCC BAA-672) (Erwinia carotovora subsp. atroseptica)).